Here is a 424-residue protein sequence, read N- to C-terminus: Dihydroorotase (424 aa).

2 residues coordinate Zn(2+): His-58 and His-60. Residues 60-62, Asn-92, and Asn-276 each bind substrate; that span reads HLR. Position 303 (Asp-303) interacts with Zn(2+). Residue Asp-303 is part of the active site. Substrate is bound by residues His-307 and 321–322; that span reads FG.

This sequence belongs to the metallo-dependent hydrolases superfamily. DHOase family. Class I DHOase subfamily. It depends on Zn(2+) as a cofactor.

It carries out the reaction (S)-dihydroorotate + H2O = N-carbamoyl-L-aspartate + H(+). Its pathway is pyrimidine metabolism; UMP biosynthesis via de novo pathway; (S)-dihydroorotate from bicarbonate: step 3/3. In terms of biological role, catalyzes the reversible cyclization of carbamoyl aspartate to dihydroorotate. The chain is Dihydroorotase from Staphylococcus aureus (strain COL).